The primary structure comprises 305 residues: MNNQCKTIAHVLRVNNGQELHVWETPPKENVPFKNNTILIASGFARRMDHFAGLAEYLSENGFHVFRYDSLHHVGLSSGSIDEFTMTTGKNSLCTVYHWLQTKGTQNIGLIAASLSARVAYEVISDLELSFLITAVGVVNLRDTLEKALGFDYLSLPIDELPNDLDFEGHKLGSEVFVRDCFEHHWDTLDSTLDKVANTSVPLIAFTANNDDWVKQEEVYDMLAHIRTGHCKLYSLLGSSHDLGENLVVLRNFYQSVTKAAIAMDGGSLEIDVDFIEPDFEQLTIATVNERRLKAEIESRTPEMA.

Active-site charge relay system residues include Ser114, Asp211, and His241.

This sequence belongs to the LuxD family.

It functions in the pathway lipid metabolism; fatty acid reduction for biolumincescence. Its function is as follows. Acyl transferase is part of the fatty acid reductase system required for aldehyde biosynthesis; it produces fatty acids for the luminescent reaction. The protein is Acyl transferase (luxD) of Vibrio harveyi (Beneckea harveyi).